Consider the following 579-residue polypeptide: MDASKLPLGSFVGTTLLLFILYKLVKLAYYVGQAKNTGLPYTIVPVLETEFLGKLLTPLIRPLFTSRLSRGKGWPRWIRFSILDWAWEEKRRVHEELGDVFLVVSSEGLICYTADADMSWDVMNRRNEFLKPRDKYKVLEPYGPNVATTEGKAYNFHVRITAPPFNDGSGANDLVWNEASDQARALMESWSQENTTRDLSLDINRLTLAVIAYTGFGKRLDFKTEVSDLRNKIPPGYKMSLHHALHLVTTFMVKILLIPKWIMKMTSMKEIAVAHGELEKYMREMIRTETANLSKDSEYQSADAKGNLLTSVLRASAFEAKAAGRKQAFSEDEVLGNLFLYLLAGYETTANAMTYGFITLALRQDLQDRIIQEVDGVYAEAAAEGRTSLNYTDDFEKFQYTYGFMYEVFRLYPGVCIITKMVPKDTTITVYPENNSPQQHVLPAECRVYLNVNAVHYHERYWPDPWALKPDRWMGTIGATPNARSNKKVVAGDKSRQVRGTLMTFSGGARACLGRKFTQSEYISALATVLREYRIVLGEGMDAKVVKQEIDHLAAGTVTLAPLKYVKLALKKRTDVKTG.

The helical transmembrane segment at 6-25 (LPLGSFVGTTLLLFILYKLV) threads the bilayer. Asn194, Asn292, and Asn390 each carry an N-linked (GlcNAc...) asparagine glycan. Cys512 is a heme binding site.

This sequence belongs to the cytochrome P450 family. The cofactor is heme.

It localises to the membrane. Its pathway is sesquiterpene biosynthesis. Cytochrome P450 monooxygenase; part of the gene cluster that mediates the biosynthesis of PR-toxin, a bicyclic sesquiterpene belonging to the eremophilane class and acting as a mycotoxin. The first step of the pathway is catalyzed by the aristolochene synthase which performs the cyclization of trans,trans-farnesyl diphosphate (FPP) to the bicyclic sesquiterpene aristolochene. Following the formation of aristolochene, the non-oxygenated aristolochene is converted to the trioxygenated intermediate eremofortin B, via 7-epi-neopetasone. This conversion appears to involve three enzymes, a hydroxysterol oxidase-like enzyme, the quinone-oxidase prx3 that forms the quinone-type-structure in the bicyclic nucleus of aristolochene with the C8-oxo group and the C-3 hydroxyl group, and the P450 monooxygenase prx9 that introduces the epoxide at the double bond between carbons 1 and 2. No monoxy or dioxy-intermediates have been reported to be released to the broth, so these three early oxidative reactions may be coupled together. Eremofortin B is further oxidized by another P450 monooxygenase, that introduces a second epoxide between carbons 7 and 11 prior to acetylation to eremofortin A by the acetyltransferase prx11. The second epoxidation may be performed by a second P450 monooxygenase. After the acetylation step, eremofortin A is converted to eremofortin C and then to PR-toxin. First the conversion of eremofortin A to eremofortin C proceeds by oxidation of the side chain of the molecule at C-12 and is catalyzed by the short-chain oxidoreductase prx1. The cytochrome P450 monooxygenase prx8 also plays a role in this step. The primary alcohol formed at C-12 is finally oxidized by the short-chain alcohol dehydrogenase prx4 that forms PR-toxin. In Penicillium rubens (strain ATCC 28089 / DSM 1075 / NRRL 1951 / Wisconsin 54-1255) (Penicillium chrysogenum), this protein is Cytochrome P450 monooxygenase prx9.